The chain runs to 127 residues: Large ribosomal subunit protein bL19 (127 aa).

This sequence belongs to the bacterial ribosomal protein bL19 family.

In terms of biological role, this protein is located at the 30S-50S ribosomal subunit interface and may play a role in the structure and function of the aminoacyl-tRNA binding site. This is Large ribosomal subunit protein bL19 from Acidovorax ebreus (strain TPSY) (Diaphorobacter sp. (strain TPSY)).